We begin with the raw amino-acid sequence, 681 residues long: Serine/threonine-protein kinase PAK 6 (681 aa).

Disordered regions lie at residues 1–30, 149–169, 200–256, and 268–355; these read MFRK…DPKE, GGTP…PRVL, QSSP…ESSL, and TAAT…PRTW. The CRIB domain maps to 12–25; sequence ISAPQNFQHRVHTS. The linker stretch occupies residues 26 to 406; sequence FDPKEGKFVG…VVDQGDPRLL (381 aa). Low complexity-rich tracts occupy residues 201-212 and 268-278; these read SSPPGASPPTGT and TAATAPPSSSK. Residues 308-333 show a composition bias toward polar residues; it reads SLPSDQPVGTFSPLTTSDTSSPQKSL. The Protein kinase domain occupies 407–658; that stretch reads LDSYVKIGEG…AQELLDHPFL (252 aa). ATP is bound by residues 413–421 and Lys436; that span reads IGEGSTGIV. Asp526 (proton acceptor) is an active-site residue. The residue at position 560 (Ser560) is a Phosphoserine; by autocatalysis.

The protein belongs to the protein kinase superfamily. STE Ser/Thr protein kinase family. STE20 subfamily. As to quaternary structure, interacts tightly with GTP-bound but not GDP-bound CDC42/p21 and RAC1. Interacts with the androgen receptor AR and the estrogen receptor ESR1. Interacts with IQGAP1 and PPM1B. In terms of processing, autophosphorylated. Phosphorylated by MAP2K6//MAPKK6, leading to PAK6 activation. In terms of tissue distribution, selectively expressed in brain and testis, with lower levels in multiple tissues including prostate and breast.

It localises to the cytoplasm. Its subcellular location is the nucleus. The catalysed reaction is L-seryl-[protein] + ATP = O-phospho-L-seryl-[protein] + ADP + H(+). The enzyme catalyses L-threonyl-[protein] + ATP = O-phospho-L-threonyl-[protein] + ADP + H(+). Its function is as follows. Serine/threonine protein kinase that plays a role in the regulation of gene transcription. The kinase activity is induced by various effectors including AR or MAP2K6/MAPKK6. Phosphorylates the DNA-binding domain of androgen receptor/AR and thereby inhibits AR-mediated transcription. Also inhibits ESR1-mediated transcription. May play a role in cytoskeleton regulation by interacting with IQGAP1. May protect cells from apoptosis through phosphorylation of BAD. The polypeptide is Serine/threonine-protein kinase PAK 6 (PAK6) (Homo sapiens (Human)).